We begin with the raw amino-acid sequence, 604 residues long: UvrABC system protein C (604 aa).

Residues 14–91 (ESPGVYRMLD…IKEQRPPYNI (78 aa)) form the GIY-YIG domain. Residues 202-237 (EQVTAQLTRDMETASQALDFEEAARLRDQIQQLRRL) form the UVR domain. Positions 538-557 (GHRQQRDKQRRTSTLQDIPG) are disordered.

This sequence belongs to the UvrC family. Interacts with UvrB in an incision complex.

The protein localises to the cytoplasm. In terms of biological role, the UvrABC repair system catalyzes the recognition and processing of DNA lesions. UvrC both incises the 5' and 3' sides of the lesion. The N-terminal half is responsible for the 3' incision and the C-terminal half is responsible for the 5' incision. The polypeptide is UvrABC system protein C (Chromohalobacter salexigens (strain ATCC BAA-138 / DSM 3043 / CIP 106854 / NCIMB 13768 / 1H11)).